Reading from the N-terminus, the 533-residue chain is 2-isopropylmalate synthase (533 aa).

The Pyruvate carboxyltransferase domain occupies 8 to 269; that stretch reads ILIFDTTLRD…YFNPFLGRPA (262 aa). Asp-17, His-208, His-210, and Asn-244 together coordinate Mn(2+). The tract at residues 408-533 is regulatory domain; it reads RLERVQVSCG…REHPPVVASL (126 aa).

Belongs to the alpha-IPM synthase/homocitrate synthase family. LeuA type 1 subfamily. Homodimer. It depends on Mn(2+) as a cofactor.

Its subcellular location is the cytoplasm. It catalyses the reaction 3-methyl-2-oxobutanoate + acetyl-CoA + H2O = (2S)-2-isopropylmalate + CoA + H(+). The protein operates within amino-acid biosynthesis; L-leucine biosynthesis; L-leucine from 3-methyl-2-oxobutanoate: step 1/4. Functionally, catalyzes the condensation of the acetyl group of acetyl-CoA with 3-methyl-2-oxobutanoate (2-ketoisovalerate) to form 3-carboxy-3-hydroxy-4-methylpentanoate (2-isopropylmalate). This is 2-isopropylmalate synthase from Synechocystis sp. (strain ATCC 27184 / PCC 6803 / Kazusa).